The primary structure comprises 124 residues: Putative calmodulin-3 (124 aa).

EF-hand domains are found at residues Gly-1–Asn-18, Pro-19–Asp-54, Asp-56–Lys-91, and Leu-92–Lys-124. Residues Cys-2, Glu-7, Asp-32, Asp-34, Asn-36, Thr-38, Glu-43, Asp-69, Asp-71, Asn-73, and Glu-80 each contribute to the Ca(2+) site. Lys-91 carries the N6,N6,N6-trimethyllysine modification. Residues Asp-105, Asp-107, Asp-109, Gln-111, and Glu-116 each coordinate Ca(2+).

This sequence belongs to the calmodulin family. Not detected in the organs tested.

Calmodulin mediates the control of a large number of enzymes, ion channels and other proteins by Ca(2+). Among the enzymes to be stimulated by the calmodulin-Ca(2+) complex are a number of protein kinases and phosphatases. This is Putative calmodulin-3 (PCM3) from Solanum tuberosum (Potato).